An 819-amino-acid polypeptide reads, in one-letter code: Leucine--tRNA ligase (819 aa).

A 'HIGH' region motif is present at residues 40-51 (PYPSGAGLHVGH). The short motif at 600-604 (KMSKS) is the 'KMSKS' region element. K603 is an ATP binding site.

Belongs to the class-I aminoacyl-tRNA synthetase family.

The protein localises to the cytoplasm. The catalysed reaction is tRNA(Leu) + L-leucine + ATP = L-leucyl-tRNA(Leu) + AMP + diphosphate. The chain is Leucine--tRNA ligase from Chlamydia trachomatis serovar A (strain ATCC VR-571B / DSM 19440 / HAR-13).